The chain runs to 69 residues: Probable Sec-independent protein translocase protein TatE (69 aa).

The helical transmembrane segment at 1-21 (MEGISIAKLLVIGALIVLLFG) threads the bilayer. Residues 45–69 (DDQPAAKSSAQDEHPAAISETRPKE) form a disordered region. Residues 54–69 (AQDEHPAAISETRPKE) show a composition bias toward basic and acidic residues.

The protein belongs to the TatA/E family. TatE subfamily.

It is found in the cell inner membrane. Part of the twin-arginine translocation (Tat) system that transports large folded proteins containing a characteristic twin-arginine motif in their signal peptide across membranes. TatE shares overlapping functions with TatA. This is Probable Sec-independent protein translocase protein TatE from Dickeya chrysanthemi (strain Ech1591) (Dickeya zeae (strain Ech1591)).